A 306-amino-acid chain; its full sequence is Cathepsin Z (306 aa).

An N-terminal signal peptide occupies residues Met-1–Gly-20. Positions Lys-21–Asp-65 are cleaved as a propeptide — activation peptide. 5 disulfide bridges follow: Cys-39–Cys-96, Cys-93–Cys-136, Cys-130–Cys-168, Cys-158–Cys-174, and Cys-177–Cys-182. Cys-96 is an active-site residue. Residue Asn-187 is glycosylated (N-linked (GlcNAc...) asparagine). Cys-217 and Cys-299 form a disulfide bridge. Active-site residues include His-243 and Asn-265. Asn-286 is a glycosylation site (N-linked (GlcNAc...) asparagine).

It belongs to the peptidase C1 family.

It is found in the cytoplasmic vesicle. It localises to the secretory vesicle. Its subcellular location is the secreted. The enzyme catalyses Release of C-terminal amino acid residues with broad specificity, but lacks action on C-terminal proline. Shows weak endopeptidase activity.. With respect to regulation, the disulfide bridge formed between Cys-39 in the propeptide and the active site residue Cys-96 may prevent activation of the zymogen through formation of a reversible covalent bond with the active site residue. In terms of biological role, exhibits carboxy-monopeptidase as well as carboxy-dipeptidase activity. Plays an essential role in molting, a process during larval stages in which a new cuticle is formed and the old cuticle is shed. Required for the degradation and shedding of the old cuticle. This is Cathepsin Z from Onchocerca volvulus.